A 198-amino-acid polypeptide reads, in one-letter code: MSNISDIILASSSQTRKALMDRLGLTYRIISPDIDESPQGETHADDLAQRLAFEKARVVSAQYPNSIVIGSDQVAWRIDLPKQFIGKPLTIENAMAQLKQNSGQTLCFSTGLSIQHLASGFEHTLIEHYQVKFRVLTDAEIERYVTTEQPLQCAGSFRCEGLGISLFESMQGSDQTTLMGLPLITLCKYLRQLNIQLP.

The Proton acceptor role is filled by Asp-72.

This sequence belongs to the Maf family. The cofactor is a divalent metal cation.

It is found in the cytoplasm. It catalyses the reaction a ribonucleoside 5'-triphosphate + H2O = a ribonucleoside 5'-phosphate + diphosphate + H(+). The catalysed reaction is a 2'-deoxyribonucleoside 5'-triphosphate + H2O = a 2'-deoxyribonucleoside 5'-phosphate + diphosphate + H(+). Nucleoside triphosphate pyrophosphatase. May have a dual role in cell division arrest and in preventing the incorporation of modified nucleotides into cellular nucleic acids. The sequence is that of Nucleoside triphosphate pyrophosphatase from Acinetobacter baylyi (strain ATCC 33305 / BD413 / ADP1).